The chain runs to 748 residues: Cysteine--tRNA ligase, cytoplasmic (748 aa).

A disordered region spans residues 1 to 25 (MAGSSGQQGKGRRVQPQWSPPAGTQ). Alanine 2 is subject to N-acetylalanine. Position 19 is a phosphoserine (serine 19). Cysteine 55 serves as a coordination point for Zn(2+). Glycine 56 lines the L-cysteine pocket. Residues 57-67 (PTVYDASHMGH) carry the 'HIGH' region motif. Threonine 96 provides a ligand contact to L-cysteine. The 'KIIK' region signature appears at 101–104 (KIIK). Residues serine 305 and serine 307 each carry the phosphoserine modification. Zn(2+)-binding residues include cysteine 348, histidine 373, and glutamate 377. Residue histidine 373 coordinates L-cysteine. A 'KMSKS' region motif is present at residues 406–410 (KMSKS). Lysine 409 contributes to the ATP binding site. 2 stretches are compositionally biased toward basic and acidic residues: residues 654-679 (KRQVEEEKRKKKEEAARRKQEQEAAK) and 700-717 (KFDENGLPTHDAEGKELS). Disordered regions lie at residues 654 to 686 (KRQVEEEKRKKKEEAARRKQEQEAAKLAKMKIP) and 700 to 721 (KFDENGLPTHDAEGKELSKGQA). Serine 746 carries the post-translational modification Phosphoserine.

Homodimer. Zn(2+) serves as cofactor.

The protein resides in the cytoplasm. The catalysed reaction is tRNA(Cys) + L-cysteine + ATP = L-cysteinyl-tRNA(Cys) + AMP + diphosphate. Functionally, catalyzes the ATP-dependent ligation of cysteine to tRNA(Cys). This chain is Cysteine--tRNA ligase, cytoplasmic (CARS1), found in Macaca fascicularis (Crab-eating macaque).